Consider the following 240-residue polypeptide: Lactate utilization protein C (240 aa).

Belongs to the LutC/YkgG family.

In terms of biological role, is involved in L-lactate degradation and allows cells to grow with lactate as the sole carbon source. This Bacillus pumilus (strain SAFR-032) protein is Lactate utilization protein C.